The primary structure comprises 55 residues: Small ribosomal subunit protein bS21 (55 aa).

This sequence belongs to the bacterial ribosomal protein bS21 family.

This chain is Small ribosomal subunit protein bS21, found in Ureaplasma parvum serovar 3 (strain ATCC 27815 / 27 / NCTC 11736).